We begin with the raw amino-acid sequence, 281 residues long: Endochitinase At2g43610 (281 aa).

The N-terminal stretch at 1–28 (MATQNAILKKALIIFLFTLTIMTGTAFS) is a signal peptide. Residues 29–66 (QNCGTNGCKGNMCCSRWGYCGTTKAYCGTGCQSGPCNS) form the Chitin-binding type-1 domain. Disulfide bonds link Cys-31-Cys-42, Cys-36-Cys-48, Cys-41-Cys-55, and Cys-59-Cys-64. The segment at 86–281 (GTIASVITPA…GVTPGTNLSC (196 aa)) is catalytic. The active-site Proton donor is Glu-148. N-linked (GlcNAc...) asparagine glycosylation is present at Asn-278.

The protein belongs to the glycosyl hydrolase 19 family. Chitinase class I subfamily.

It catalyses the reaction Random endo-hydrolysis of N-acetyl-beta-D-glucosaminide (1-&gt;4)-beta-linkages in chitin and chitodextrins.. The chain is Endochitinase At2g43610 from Arabidopsis thaliana (Mouse-ear cress).